Here is a 266-residue protein sequence, read N- to C-terminus: Thymidylate synthase (266 aa).

Arg-24 contributes to the dUMP binding site. His-54 is a binding site for (6R)-5,10-methylene-5,6,7,8-tetrahydrofolate. 129–130 (RR) is a binding site for dUMP. The active-site Nucleophile is Cys-149. Residues 169–172 (RSAD), Asn-180, and 210–212 (HIY) contribute to the dUMP site. Position 172 (Asp-172) interacts with (6R)-5,10-methylene-5,6,7,8-tetrahydrofolate. Ala-265 provides a ligand contact to (6R)-5,10-methylene-5,6,7,8-tetrahydrofolate.

It belongs to the thymidylate synthase family. Bacterial-type ThyA subfamily. Homodimer.

It is found in the cytoplasm. It carries out the reaction dUMP + (6R)-5,10-methylene-5,6,7,8-tetrahydrofolate = 7,8-dihydrofolate + dTMP. Its pathway is pyrimidine metabolism; dTTP biosynthesis. In terms of biological role, catalyzes the reductive methylation of 2'-deoxyuridine-5'-monophosphate (dUMP) to 2'-deoxythymidine-5'-monophosphate (dTMP) while utilizing 5,10-methylenetetrahydrofolate (mTHF) as the methyl donor and reductant in the reaction, yielding dihydrofolate (DHF) as a by-product. This enzymatic reaction provides an intracellular de novo source of dTMP, an essential precursor for DNA biosynthesis. This chain is Thymidylate synthase, found in Mycolicibacterium paratuberculosis (strain ATCC BAA-968 / K-10) (Mycobacterium paratuberculosis).